Here is a 963-residue protein sequence, read N- to C-terminus: MAERGGAGGGPGGAGGGSGQRGSGVAQSPQQPPPQQQQQQPPQQPTPPKLAQATSSSSSTSAAAASSSSSSTSTSMAVAVASGSAPPGGPGPGRTPAPVQMNLYATWEVDRSSSSCVPRLFSLTLKKLVMLKEMDKDLNSVVIAVKLQGSKRILRSNEIVLPASGLVETELQLTFSLQYPHFLKRDANKLQIMLQRRKRYKNRTILGYKTLAVGLINMAEVMQHPNEGALVLGLHSNVKDVSVPVAEIKIYSLSSQPIDHEGIKSKLSDRSPDIDNYSEEEEESFSSEQEGSDDPLHGQDLFYEDEDLRKVKKTRRKLTSTSAITRQPNIKQKFVALLKRFKVSDEVGFGLEHVSREQIREVEEDLDELYDSLEMYNPSDSGPEMEETESILSTPKPKLKPFFEGMSQSSSQTEIGSLNSKGSLGKDTTSPMELAALEKIKSTWIKNQDDSLTETDTLEITDQDMFGDASTSLVVPEKVKTPMKSSKTDLQGSASPSKVEGVHTPRQKRSTPLKERQLSKPLSERTNSSDSERSPDLGHSTQIPRKVVYDQLNQILVSDAALPENVILVNTTDWQGQYVAELLQDQRKPVVCTCSTVEVQAVLSALLTRIQRYCNCNSSMPRPVKVAAVGGQSYLSSILRFFVKSLANKTSDWLGYMRFLIIPLGSHPVAKYLGSVDSKYSSSFLDSGWRDLFSRSEPPVSEQLDVAGRVMQYVNGAATTHQLPVAEAMLTCRHKFPDEDSYQKFIPFIGVVKVGLVEDSPSTAGDGDDSPVVSLTVPSTSPPSSSGLSRDATATPPSSPSMSSALAIVGSPNSPYGDVIGLQVDYWLGHPGERRREGDKRDASSKNTLKSVFRSVQVSRLPHSGEAQLSGTMAMTVVTKEKNKKVPTIFLSKKPREKEVDSKSQVIEGISRLICSAKQQQTMLRVSIDGVEWSDIKFFQLAAQWPTHVKHFPVGLFSGSKAT.

Residues 1-22 (MAERGGAGGGPGGAGGGSGQRG) are compositionally biased toward gly residues. Disordered regions lie at residues 1 to 72 (MAER…SSST) and 78 to 97 (VAVA…RTPA). N-acetylalanine is present on Ala2. At Ser28 the chain carries Phosphoserine. Thr46 is subject to Phosphothreonine. The span at 53 to 72 (ATSSSSSTSAAAASSSSSST) shows a compositional bias: low complexity. Residues 168–175 (ETELQLTF) are involved in binding to AP-1. The residue at position 251 (Tyr251) is a Phosphotyrosine. The segment covering 262 to 273 (GIKSKLSDRSPD) has biased composition (basic and acidic residues). 2 disordered regions span residues 262 to 299 (GIKS…LHGQ) and 377 to 428 (NPSD…GKDT). A compositionally biased stretch (acidic residues) spans 276–293 (NYSEEEEESFSSEQEGSD). Residues 353–377 (HVSREQIREVEEDLDELYDSLEMYN) are a coiled coil. Phosphoserine occurs at positions 379 and 381. Over residues 406-428 (MSQSSSQTEIGSLNSKGSLGKDT) the composition is skewed to polar residues. Ser430 and Ser495 each carry phosphoserine. Disordered regions lie at residues 476–542 (PEKV…HSTQ) and 760–804 (SPST…SMSS). The segment covering 483–496 (MKSSKTDLQGSASP) has biased composition (polar residues). Phosphothreonine is present on Thr504. Ser519, Ser528, Ser529, Ser531, and Ser534 each carry phosphoserine. Residues 770–804 (SPVVSLTVPSTSPPSSSGLSRDATATPPSSPSMSS) are compositionally biased toward low complexity.

This sequence belongs to the PACS family. Associates with AP-1 and AP-3 but not with AP-2 complexes. Interacts with FURIN. Forms a ternary complex with FURIN and AP-1. Interacts with NPHP1; the interaction is dependent of NPHP1 phosphorylation by CK2. Interacts with PKD2 (via acidic region). Interacts with SORL1. Interacts with WDR37. In terms of assembly, (Microbial infection) Interacts with HIV-1 Nef. As to quaternary structure, (Microbial infection) Interacts with Epstein-barr virus protein BBLF1.

The protein resides in the golgi apparatus. It is found in the trans-Golgi network. Functionally, coat protein that is involved in the localization of trans-Golgi network (TGN) membrane proteins that contain acidic cluster sorting motifs. Controls the endosome-to-Golgi trafficking of furin and mannose-6-phosphate receptor by connecting the acidic-cluster-containing cytoplasmic domain of these molecules with the adapter-protein complex-1 (AP-1) of endosomal clathrin-coated membrane pits. Involved in HIV-1 nef-mediated removal of MHC-I from the cell surface to the TGN. Required for normal ER Ca2+ handling in lymphocytes. Together with WDR37, it plays an essential role in lymphocyte development, quiescence and survival. Required for stabilizing peripheral lymphocyte populations. In Homo sapiens (Human), this protein is Phosphofurin acidic cluster sorting protein 1 (PACS1).